The primary structure comprises 696 residues: MAEAPPRRLGLGPPPGDAPRAELVALTAVQSEQGEAGGGGSPRRLGLLGSPLPPGAPLPGPGSGSGSACGGQRSSAAQKRYRRLQNWVYNVLERPRGWAFVYHVFIFLLVFSCLVLSVLSTIQEHQELANECLLILEFVMIVVFGLEYIIRVWSAGCCCRYRGWQGRFRFARKPFCVIDFIVFVASVAVIAAGTQGNIFATSALRSMRFLQILRMVRMDRRGGTWKLLGSVVYAHSKELITAWYIGFLVLIFASFLVYLAEKDANSDFSSYADSLWWGTITLTTIGYGDKTPHTWLGRVLAAGFALLGISFFALPAGILGSGFALKVQEQHRQKHFEKRRMPAANLIQAAWRLYSTDTSRAYLTATWYYYDSILPSFRELALLFEHIQRARNGGLRPLEVRRAPVPDGAPSRYPPVATCHRPGSASFCPGESSRMGIKDRIRISSSQKRTGPSKQHLAPPPIPTSPSSEQVGEASSPSKVQKSWSFNDRTRFRASLRLKPRCSAEEGPSEEVAEEKSYQCELTVDDVMPAVKTVIRSVRILKFLVAKRKFKETLRPYDVKDVIEQYSAGHLDMLGRIKSLQARVDQIVGRGPGDRKTREKGDKGPSDTEAVDEISMMGRVVKVEKQVQSIEHKLDLLLGFYSRCLRSGTSASLGTVQVPLFDPDITSDYHSPVDHEDISVSAQTLSISRSVSTNMD.

A disordered region spans residues 1 to 20; it reads MAEAPPRRLGLGPPPGDAPR. Residues 1-97 are Cytoplasmic-facing; that stretch reads MAEAPPRRLG…VYNVLERPRG (97 aa). An a 1,2-diacyl-sn-glycero-3-phospho-(1D-myo-inositol-4,5-bisphosphate)-binding site is contributed by arginine 94. A helical membrane pass occupies residues 98-119; the sequence is WAFVYHVFIFLLVFSCLVLSVL. Residues 120–130 are Extracellular-facing; sequence STIQEHQELAN. A helical membrane pass occupies residues 131 to 153; that stretch reads ECLLILEFVMIVVFGLEYIIRVW. Residues 154 to 169 are Cytoplasmic-facing; sequence SAGCCCRYRGWQGRFR. Residues 170-192 traverse the membrane as a helical segment; the sequence is FARKPFCVIDFIVFVASVAVIAA. Residue lysine 173 coordinates a 1,2-diacyl-sn-glycero-3-phospho-(1D-myo-inositol-4,5-bisphosphate). Topologically, residues 193 to 203 are extracellular; that stretch reads GTQGNIFATSA. Residues 204–224 traverse the membrane as a helical; Voltage-sensor segment; that stretch reads LRSMRFLQILRMVRMDRRGGT. 4 residues coordinate a 1,2-diacyl-sn-glycero-3-phospho-(1D-myo-inositol-4,5-bisphosphate): arginine 220, arginine 221, lysine 226, and serine 236. The Cytoplasmic portion of the chain corresponds to 225-236; the sequence is WKLLGSVVYAHS. A helical transmembrane segment spans residues 237-259; it reads KELITAWYIGFLVLIFASFLVYL. Topologically, residues 260 to 271 are extracellular; it reads AEKDANSDFSSY. An intramembrane region (pore-forming) is located at residues 272–293; the sequence is ADSLWWGTITLTTIGYGDKTPH. Residue threonine 294 is a topological domain, extracellular. Residues 295–323 form a helical membrane-spanning segment; the sequence is WLGRVLAAGFALLGISFFALPAGILGSGF. At 324 to 696 the chain is on the cytoplasmic side; it reads ALKVQEQHRQ…ISRSVSTNMD (373 aa). A 1,2-diacyl-sn-glycero-3-phospho-(1D-myo-inositol-4,5-bisphosphate) contacts are provided by histidine 331 and lysine 334. The tract at residues 343–352 is interaction with CALM; that stretch reads AANLIQAAWR. The interval 445-484 is disordered; sequence SSQKRTGPSKQHLAPPPIPTSPSSEQVGEASSPSKVQKSW. Polar residues predominate over residues 465-484; sequence SPSSEQVGEASSPSKVQKSW. Residues 536–550 form an interaction with CALM region; it reads RSVRILKFLVAKRKF. The segment at 547 to 651 is C-terminal assembly domain (tetramerization); sequence KRKFKETLRP…SRCLRSGTSA (105 aa). Residues 589–609 are disordered; sequence GRGPGDRKTREKGDKGPSDTE. A compositionally biased stretch (basic and acidic residues) spans 592 to 606; the sequence is PGDRKTREKGDKGPS. Positions 610-645 form a coiled coil; the sequence is AVDEISMMGRVVKVEKQVQSIEHKLDLLLGFYSRCL.

The protein belongs to the potassium channel family. KQT (TC 1.A.1.15) subfamily. Kv7.4/KCNQ4 sub-subfamily. Homotetramer. Interacts (via C-terminus) with calmodulin; forms a heterooctameric structure (with 4:4 KCNQ1:CALM stoichiometry); the interaction is calcium-independent, constitutive, participates in the proper assembly of a functional channel. The interaction with calcium-free CALM controls channel trafficking whereas interaction with calcium-bound CALM regulates channel gating. May form a functional heteromultimeric channel with KCNQ3. Interacts with HSP90AB1; promotes cell surface expression of KCNQ4. In the inner ear expressed in the outer sensory hair cells of the cochlea and in type I hair cells of the vestibular organs. Also expressed in the postsynaptic membrane of the calyx nerve endings innervating type I cells. In the brain expressed in neurons of many, but not all, nuclei of the central auditory pathway. Absent from most other brain regions.

It is found in the basal cell membrane. The enzyme catalyses K(+)(in) = K(+)(out). With respect to regulation, two molecules of phosphatidylinositol-4,5-bisphosphate (PIP2-I and PIP2-II) are essential to activate KCNQ4 channel by inducing the coupling of the voltage-sensing domain (VSD) and the pore-forming domain (PD). Upon channel activation, PIP2-I and PIP2-II disrupt the VSD-calmodulin/CALM interaction, causing the release of CALM from the VSD which triggers the opening of the gate. Calcium suppresses KCNQ4 channel current through calcium-bound CALM C-terminus. Therefore CALM acts as calcium sensor that controls channel activity. Functionally, pore-forming subunit of the voltage-gated potassium (Kv) channel involved in the regulation of sensory cells excitability in the cochlea. KCNQ4/Kv7.4 channel is composed of 4 pore-forming subunits assembled as tetramers. Promotes the outflow of potassium ions in the repolarization phase of action potential which plays a role in regulating membrane potential of excitable cells. The channel conducts a slowly activating and deactivating current. Current often shows some inward rectification at positive potentials. Channel may be selectively permeable in vitro to other cations besides potassium, in decreasing order of affinity K(+) = Rb(+) &gt; Cs(+) &gt; Na(+). Important for normal physiological function of inner ear such as sensory perception of sound. In Mus musculus (Mouse), this protein is Potassium voltage-gated channel subfamily KQT member 4.